Reading from the N-terminus, the 108-residue chain is Large ribosomal subunit protein bL31B (108 aa).

Positions 81–108 are disordered; it reads KPAQPVQAPAEEGPVVKGKKKAPAKKKK. A compositionally biased stretch (basic residues) spans 97–108; the sequence is KGKKKAPAKKKK.

Belongs to the bacterial ribosomal protein bL31 family. Type B subfamily. As to quaternary structure, part of the 50S ribosomal subunit.

The sequence is that of Large ribosomal subunit protein bL31B from Chlamydia caviae (strain ATCC VR-813 / DSM 19441 / 03DC25 / GPIC) (Chlamydophila caviae).